Reading from the N-terminus, the 483-residue chain is uncharacterized protein (483 aa).

Residues 96–137 (IQCDQDPLSSISWSPSGELLLWSSFDSKITVWSLNTQKGYLL) form a WD repeat.

This is an uncharacterized protein from Schizosaccharomyces pombe (strain 972 / ATCC 24843) (Fission yeast).